A 335-amino-acid polypeptide reads, in one-letter code: Type 1 fimbrin D-mannose specific adhesin (335 aa).

A signal peptide spans 1-22; sequence MKIYSALLLAGTALFFTHPALA.

The protein belongs to the fimbrial protein family.

It is found in the fimbrium. Involved in regulation of length and mediation of adhesion of type 1 fimbriae (but not necessary for the production of fimbriae). A mannose-binding adhesin. This chain is Type 1 fimbrin D-mannose specific adhesin (fimH), found in Salmonella typhimurium (strain LT2 / SGSC1412 / ATCC 700720).